The sequence spans 313 residues: Olfactory receptor 10P1 (313 aa).

Residues 1–25 are Extracellular-facing; that stretch reads MAGENHTTLPEFLLLGFSDLKALQG. N5 is a glycosylation site (N-linked (GlcNAc...) asparagine). Residues 26–46 traverse the membrane as a helical segment; it reads PLFWVVLLVYLVTLLGNSLII. Topologically, residues 47-54 are cytoplasmic; it reads LLTQVSPA. The chain crosses the membrane as a helical span at residues 55-75; sequence LHSPMYFFLRQLSVVELFYTT. Over 76–100 the chain is Extracellular; that stretch reads DIVPRTLANLGSPHPQAISFQGCAA. The chain crosses the membrane as a helical span at residues 101–121; it reads QMYVFIVLGISECCLLTAMAY. Residues 122–140 are Cytoplasmic-facing; it reads DRYVAICQPLRYSTLLSPR. A helical membrane pass occupies residues 141–161; that stretch reads ACMAMVGTSWLTGIITATTHA. Residues 162–198 are Extracellular-facing; that stretch reads SLIFSLPFRSHPIIPHFLCDILPVLRLASAGKHRSEI. A helical transmembrane segment spans residues 199–218; the sequence is SVMTATIVFIMIPFSLIVTS. At 219 to 238 the chain is on the cytoplasmic side; that stretch reads YIRILGAILAMASTQSRRKV. The helical transmembrane segment at 239-259 threads the bilayer; sequence FSTCSSHLLVVSLFFGTASIT. The Extracellular segment spans residues 260-272; the sequence is YIRPQAGSSVTTD. The chain crosses the membrane as a helical span at residues 273–293; sequence RVLSLFYTVITPMLNPIIYTL. The Cytoplasmic segment spans residues 294-313; the sequence is RNKDVRRALRHLVKRQRPSP.

Belongs to the G-protein coupled receptor 1 family.

It is found in the cell membrane. Functionally, odorant receptor. This is Olfactory receptor 10P1 (OR10P1) from Homo sapiens (Human).